A 350-amino-acid chain; its full sequence is Arabinogalactan endo-beta-1,4-galactanase A (350 aa).

Positions 1–16 (MIYPLLLSALPLLSSA) are cleaved as a signal peptide. A glycan (N-linked (GlcNAc...) asparagine) is linked at Asn128. Glu152 acts as the Proton donor in catalysis. Catalysis depends on Glu262, which acts as the Nucleophile.

It belongs to the glycosyl hydrolase 53 family.

It localises to the secreted. The enzyme catalyses The enzyme specifically hydrolyzes (1-&gt;4)-beta-D-galactosidic linkages in type I arabinogalactans.. Its function is as follows. Endogalactanase involved in the degradation of plant cell wall polysaccharides, and more particularly of hairy regions of pectin. The chain is Arabinogalactan endo-beta-1,4-galactanase A (galA) from Aspergillus niger.